Here is a 195-residue protein sequence, read N- to C-terminus: Cholesin (195 aa).

The segment at 1 to 78 is disordered; the sequence is MAKHKRKGLE…KEEKKRLREA (78 aa). Composition is skewed to basic and acidic residues over residues 8–18 and 26–39; these read GLEGTGKESKR and ETPR…DKET. A phosphoserine mark is found at Ser41, Ser48, and Ser52. Residues 53-77 show a composition bias toward basic and acidic residues; it reads PEERRVLERKLKKERKKEEKKRLRE. Position 96 is a phosphoserine (Ser96).

In terms of tissue distribution, secreted via exosomes, secreted from the instestine, secretion is induced by feeding and cholesterol absorption. Expressed in enterocytes.

The protein resides in the secreted. Hormone secreted from the intestine in response to cholesterol, where it acts to inhibit cholesterol synthesis in the liver and VLDL secretion,leading to a reduction in circulating cholesterol levels. Acts through binding to its receptor, GPR146. The polypeptide is Cholesin (Chlsn) (Mus musculus (Mouse)).